The chain runs to 758 residues: 5-methyltetrahydropteroyltriglutamate--homocysteine methyltransferase (758 aa).

Residues 16 to 19 (RELK) and Lys116 each bind 5-methyltetrahydropteroyltri-L-glutamate. L-homocysteine is bound by residues 436–438 (IGS) and Glu489. L-methionine contacts are provided by residues 436–438 (IGS) and Glu489. Residues 520-521 (RC) and Trp566 contribute to the 5-methyltetrahydropteroyltri-L-glutamate site. Asp604 serves as a coordination point for L-homocysteine. Asp604 provides a ligand contact to L-methionine. Glu610 is a binding site for 5-methyltetrahydropteroyltri-L-glutamate. Zn(2+)-binding residues include His646, Cys648, and Glu670. Catalysis depends on His699, which acts as the Proton donor. A Zn(2+)-binding site is contributed by Cys731.

Belongs to the vitamin-B12 independent methionine synthase family. The cofactor is Zn(2+).

It carries out the reaction 5-methyltetrahydropteroyltri-L-glutamate + L-homocysteine = tetrahydropteroyltri-L-glutamate + L-methionine. Its pathway is amino-acid biosynthesis; L-methionine biosynthesis via de novo pathway; L-methionine from L-homocysteine (MetE route): step 1/1. In terms of biological role, catalyzes the transfer of a methyl group from 5-methyltetrahydrofolate to homocysteine resulting in methionine formation. The sequence is that of 5-methyltetrahydropteroyltriglutamate--homocysteine methyltransferase from Xylella fastidiosa (strain M12).